A 271-amino-acid polypeptide reads, in one-letter code: MKAASREALATVESKLDEFLSGDRSVATATQAGQDLFEVVRVLDGDRELRVALTDDASTSEERKSLVQTLFGGKVSPVALQVLQEAAAAQWSTPRDIARGLIILGRRALLRGAEFEGKLGQVEDELFSLSRVLDREGELTQLLSDRTATSDRKVGLLASVLYGKVTMVTEALALQAIGRPEQNPIDDLAGLADTAAKLQGRTIARVTSAGELNDSQRAALAEKLGKIYGRAMSIHSEVDTSLLGGMTIRVGDEVIDGSTAGKIARLRAQMA.

This sequence belongs to the ATPase delta chain family. In terms of assembly, F-type ATPases have 2 components, F(1) - the catalytic core - and F(0) - the membrane proton channel. F(1) has five subunits: alpha(3), beta(3), gamma(1), delta(1), epsilon(1). F(0) has three main subunits: a(1), b(2) and c(10-14). The alpha and beta chains form an alternating ring which encloses part of the gamma chain. F(1) is attached to F(0) by a central stalk formed by the gamma and epsilon chains, while a peripheral stalk is formed by the delta and b chains.

The protein localises to the cell membrane. In terms of biological role, f(1)F(0) ATP synthase produces ATP from ADP in the presence of a proton or sodium gradient. F-type ATPases consist of two structural domains, F(1) containing the extramembraneous catalytic core and F(0) containing the membrane proton channel, linked together by a central stalk and a peripheral stalk. During catalysis, ATP synthesis in the catalytic domain of F(1) is coupled via a rotary mechanism of the central stalk subunits to proton translocation. Its function is as follows. This protein is part of the stalk that links CF(0) to CF(1). It either transmits conformational changes from CF(0) to CF(1) or is implicated in proton conduction. This Corynebacterium aurimucosum (strain ATCC 700975 / DSM 44827 / CIP 107346 / CN-1) (Corynebacterium nigricans) protein is ATP synthase subunit delta.